Reading from the N-terminus, the 221-residue chain is Probable transaldolase (221 aa).

Catalysis depends on lysine 83, which acts as the Schiff-base intermediate with substrate.

It belongs to the transaldolase family. Type 3B subfamily.

Its subcellular location is the cytoplasm. The catalysed reaction is D-sedoheptulose 7-phosphate + D-glyceraldehyde 3-phosphate = D-erythrose 4-phosphate + beta-D-fructose 6-phosphate. It participates in carbohydrate degradation; pentose phosphate pathway; D-glyceraldehyde 3-phosphate and beta-D-fructose 6-phosphate from D-ribose 5-phosphate and D-xylulose 5-phosphate (non-oxidative stage): step 2/3. Its function is as follows. Transaldolase is important for the balance of metabolites in the pentose-phosphate pathway. The sequence is that of Probable transaldolase from Herpetosiphon aurantiacus (strain ATCC 23779 / DSM 785 / 114-95).